Here is a 320-residue protein sequence, read N- to C-terminus: Ribosomal RNA small subunit methyltransferase H (320 aa).

S-adenosyl-L-methionine is bound by residues 36 to 38, D56, F82, D103, and Q110; that span reads GGH.

This sequence belongs to the methyltransferase superfamily. RsmH family.

It is found in the cytoplasm. It carries out the reaction cytidine(1402) in 16S rRNA + S-adenosyl-L-methionine = N(4)-methylcytidine(1402) in 16S rRNA + S-adenosyl-L-homocysteine + H(+). Its function is as follows. Specifically methylates the N4 position of cytidine in position 1402 (C1402) of 16S rRNA. The polypeptide is Ribosomal RNA small subunit methyltransferase H (Chromobacterium violaceum (strain ATCC 12472 / DSM 30191 / JCM 1249 / CCUG 213 / NBRC 12614 / NCIMB 9131 / NCTC 9757 / MK)).